We begin with the raw amino-acid sequence, 271 residues long: MSHIQRETSCSRPRLNSNLDADLYGYKWARDNVGQSGATIYRLYGKPDAPELFLKHGKGSVANDVTDEMVRLNWLTEFMPLPTIKHFIRTPDDAWLLTTAIPGKTAFQVLEEYPDSGENIVDALAVFLRRLHSIPVCNCPFNSDRVFRLAQAQSRMNNGLVDASDFDDERNGWPVEQVWKEMHKLLPFSPDSVVTHGDFSLDNLIFDEGKLIGCIDVGRVGIADRYQDLAILWNCLGEFSPSLQKRLFQKYGIDNPDMNKLQFHLMLDEFF.

Catalysis depends on Asp198, which acts as the Proton acceptor.

It belongs to the aminoglycoside phosphotransferase family.

The enzyme catalyses kanamycin A + ATP = kanamycin 3'-phosphate + ADP + H(+). Functionally, resistance to kanamycin and structurally-related aminoglycosides, including amikacin. The protein is Aminoglycoside 3'-phosphotransferase (aphA1) of Escherichia coli.